The following is a 169-amino-acid chain: MSVLQVLHIPDERLRKVAKPVEEVNAEIQRIVDDMFETMYAEEGIGLAATQVDIHQRIIVIDVSENRDERLVLINPELLEKSGETGIEEGCLSIPEQRALVPRAEKVKIRALDRDGNPFELEADGLLAICIQHEMDHLVGKLFIDYLSPLKQQRIRQKVEKLDRLNARA.

Fe cation contacts are provided by C91 and H133. E134 is a catalytic residue. H137 contacts Fe cation.

This sequence belongs to the polypeptide deformylase family. Fe(2+) serves as cofactor.

It carries out the reaction N-terminal N-formyl-L-methionyl-[peptide] + H2O = N-terminal L-methionyl-[peptide] + formate. Functionally, removes the formyl group from the N-terminal Met of newly synthesized proteins. Requires at least a dipeptide for an efficient rate of reaction. N-terminal L-methionine is a prerequisite for activity but the enzyme has broad specificity at other positions. This Salmonella agona (strain SL483) protein is Peptide deformylase.